A 387-amino-acid chain; its full sequence is D(4) dopamine receptor (387 aa).

Over 1-34 (MGNSSATEDGGLLAGRGPESLGTGAGLGGAGAAA) the chain is Extracellular. N3 is a glycosylation site (N-linked (GlcNAc...) asparagine). The helical transmembrane segment at 35-57 (LVGGVLLIGLVLAGNSLVCVSVA) threads the bilayer. The Cytoplasmic segment spans residues 58-67 (SERTLQTPTN). The chain crosses the membrane as a helical span at residues 68–90 (YFIVSLAAADLLLAVLVLPLFVY). Na(+) is bound at residue D77. The Extracellular segment spans residues 91-106 (SEVQGGVWLLSPRLCD). Residues C105 and C180 are joined by a disulfide bond. A helical membrane pass occupies residues 107-128 (TLMAMDVMLCTASIFNLCAISV). S119 contacts Na(+). Residues 129–146 (DRFVAVTVPLRYNQQGQC) are Cytoplasmic-facing. Residues 147-170 (QLLLIAATWLLSAAVASPVVCGLN) form a helical membrane-spanning segment. Residues 171–186 (DVPGRDPAVCCLENRD) are Extracellular-facing. Residues 187-208 (YVVYSSVCSFFLPCPLMLLLYW) form a helical membrane-spanning segment. Topologically, residues 209–314 (ATFRGLRRWE…ITGRERKAMR (106 aa)) are cytoplasmic. Disordered regions lie at residues 224–247 (KLHSRAPRRPSGPGPPVSDPTQGP) and 287–306 (AALPQPPEPSSRRRRGAKIT). Residues 315-337 (VLPVVVGAFLVCWTPFFVVHITR) traverse the membrane as a helical segment. At 338-346 (ALCPACFVS) the chain is on the extracellular side. C340 and C343 form a disulfide bridge. Residues 347–369 (PRLVSAVTWLGYVNSALNPIIYT) form a helical membrane-spanning segment. The Cytoplasmic portion of the chain corresponds to 370-387 (IFNAEFRSVFRKTLRLRC). C387 is lipidated: S-palmitoyl cysteine.

Belongs to the G-protein coupled receptor 1 family. As to quaternary structure, forms homo- and heterooligomers with DRD2. D4.7 allele exhibits higher affinity for homodimers compared to DRD2 heterodimers, while alleles D42. and 4.4 have similar affinities for both. The interaction with DRD2 may modulate agonist-induced downstream signaling. Interacts with CLIC6. Interacts with GPRASP1. May interact with ADORA2A. Interacts with KLHL12. Palmitoylated. Palmitoylation of the C-terminal Cys is important for normal expression at the cell membrane. In terms of tissue distribution, detected in olfactory bulb, hypothalamus, olfactory tubercle, brainstem and striatum.

The protein localises to the cell membrane. Dopamine receptor responsible for neuronal signaling in the mesolimbic system of the brain, an area of the brain that regulates emotion and complex behavior. Activated by dopamine, but also by epinephrine and norepinephrine, and by numerous synthetic agonists and drugs. Agonist binding triggers signaling via G proteins that inhibit adenylyl cyclase. Modulates the circadian rhythm of contrast sensitivity by regulating the rhythmic expression of NPAS2 in the retinal ganglion cells. In Mus musculus (Mouse), this protein is D(4) dopamine receptor (Drd4).